Here is a 125-residue protein sequence, read N- to C-terminus: Snaclec coagulation factor IX/factor X-binding protein subunit B (125 aa).

The region spanning 1-122 (DCSSGWTAYG…SLFGHFVCKS (122 aa)) is the C-type lectin domain. 3 disulfide bridges follow: C2/C13, C30/C120, and C97/C112. The Ca(2+) site is built by S41 and E47.

It belongs to the snaclec family. In terms of assembly, heterodimer of subunits A and B; disulfide-linked. Expressed by the venom gland.

Its subcellular location is the secreted. Functionally, anticoagulant protein which binds to coagulation factor IX (F9) and coagulation factor X (F10) in the presence of calcium. It may bind the gamma-carboxyglutamic acid-domain regions of factors with a 1 to 1 stoichiometry. The dissociation constant (K(d)) are 6.6 nM for factor IX (F9) and 125 nM for factor X (F10). Does not bind carbohydrates. The chain is Snaclec coagulation factor IX/factor X-binding protein subunit B from Echis carinatus (Saw-scaled viper).